Reading from the N-terminus, the 160-residue chain is SsrA-binding protein (160 aa).

It belongs to the SmpB family.

It localises to the cytoplasm. Its function is as follows. Required for rescue of stalled ribosomes mediated by trans-translation. Binds to transfer-messenger RNA (tmRNA), required for stable association of tmRNA with ribosomes. tmRNA and SmpB together mimic tRNA shape, replacing the anticodon stem-loop with SmpB. tmRNA is encoded by the ssrA gene; the 2 termini fold to resemble tRNA(Ala) and it encodes a 'tag peptide', a short internal open reading frame. During trans-translation Ala-aminoacylated tmRNA acts like a tRNA, entering the A-site of stalled ribosomes, displacing the stalled mRNA. The ribosome then switches to translate the ORF on the tmRNA; the nascent peptide is terminated with the 'tag peptide' encoded by the tmRNA and targeted for degradation. The ribosome is freed to recommence translation, which seems to be the essential function of trans-translation. In Klebsiella pneumoniae (strain 342), this protein is SsrA-binding protein.